Reading from the N-terminus, the 112-residue chain is Nitrogen regulatory protein P-II (112 aa).

Y51 carries the O-UMP-tyrosine modification.

It belongs to the P(II) protein family. As to quaternary structure, homotrimer.

Functionally, P-II indirectly controls the transcription of the glutamine synthetase gene (glnA). P-II prevents NR-II-catalyzed conversion of NR-I to NR-I-phosphate, the transcriptional activator of glnA. When P-II is uridylylated to P-II-UMP, these events are reversed. When the ratio of Gln to 2-ketoglutarate decreases, P-II is uridylylated to P-II-UMP, which causes the deadenylation of glutamine synthetase, so activating the enzyme. This chain is Nitrogen regulatory protein P-II (glnB), found in Cereibacter sphaeroides (Rhodobacter sphaeroides).